The primary structure comprises 559 residues: Dihydroxy-acid dehydratase (559 aa).

Cys52 provides a ligand contact to [2Fe-2S] cluster. Residue Asp84 coordinates Mg(2+). Cys125 is a [2Fe-2S] cluster binding site. Residues Asp126 and Lys127 each contribute to the Mg(2+) site. Lys127 carries the post-translational modification N6-carboxylysine. A [2Fe-2S] cluster-binding site is contributed by Cys197. Residue Glu447 coordinates Mg(2+). Residue Ser473 is the Proton acceptor of the active site.

The protein belongs to the IlvD/Edd family. Homodimer. Requires [2Fe-2S] cluster as cofactor. Mg(2+) is required as a cofactor.

It catalyses the reaction (2R)-2,3-dihydroxy-3-methylbutanoate = 3-methyl-2-oxobutanoate + H2O. The catalysed reaction is (2R,3R)-2,3-dihydroxy-3-methylpentanoate = (S)-3-methyl-2-oxopentanoate + H2O. It participates in amino-acid biosynthesis; L-isoleucine biosynthesis; L-isoleucine from 2-oxobutanoate: step 3/4. The protein operates within amino-acid biosynthesis; L-valine biosynthesis; L-valine from pyruvate: step 3/4. Functionally, functions in the biosynthesis of branched-chain amino acids. Catalyzes the dehydration of (2R,3R)-2,3-dihydroxy-3-methylpentanoate (2,3-dihydroxy-3-methylvalerate) into 2-oxo-3-methylpentanoate (2-oxo-3-methylvalerate) and of (2R)-2,3-dihydroxy-3-methylbutanoate (2,3-dihydroxyisovalerate) into 2-oxo-3-methylbutanoate (2-oxoisovalerate), the penultimate precursor to L-isoleucine and L-valine, respectively. The polypeptide is Dihydroxy-acid dehydratase (Roseiflexus sp. (strain RS-1)).